Consider the following 235-residue polypeptide: MKLGVNIDHVATLRNARGTSYPDPLKAAEIAIDAGADFITVHLREDRRHIRDEDVFNLKKSISTELNLEIAATEEMLEIAKKVKPYSISIVPEKREELTTEGGLDIVNMHSKLSSIIEEMHSSSIKVSLFIDPNIDQLKYLEKLGTKPDIIEIHTGDYCDNPSEKKLQLITNAAEYVNKLGIECHAGHGITYEHAKKMTRIPHISALNIGHYLISEAVFYGLHSVVKTMKMTMSN.

Asn-6 serves as a coordination point for 3-amino-2-oxopropyl phosphate. Asp-8–His-9 contacts 1-deoxy-D-xylulose 5-phosphate. Position 17 (Arg-17) interacts with 3-amino-2-oxopropyl phosphate. His-42 acts as the Proton acceptor in catalysis. Arg-44 and His-49 together coordinate 1-deoxy-D-xylulose 5-phosphate. Glu-69 (proton acceptor) is an active-site residue. Thr-99 contacts 1-deoxy-D-xylulose 5-phosphate. His-188 (proton donor) is an active-site residue. Residues Gly-189 and Gly-210–His-211 contribute to the 3-amino-2-oxopropyl phosphate site.

This sequence belongs to the PNP synthase family. As to quaternary structure, homooctamer; tetramer of dimers.

The protein localises to the cytoplasm. It carries out the reaction 3-amino-2-oxopropyl phosphate + 1-deoxy-D-xylulose 5-phosphate = pyridoxine 5'-phosphate + phosphate + 2 H2O + H(+). It participates in cofactor biosynthesis; pyridoxine 5'-phosphate biosynthesis; pyridoxine 5'-phosphate from D-erythrose 4-phosphate: step 5/5. Its function is as follows. Catalyzes the complicated ring closure reaction between the two acyclic compounds 1-deoxy-D-xylulose-5-phosphate (DXP) and 3-amino-2-oxopropyl phosphate (1-amino-acetone-3-phosphate or AAP) to form pyridoxine 5'-phosphate (PNP) and inorganic phosphate. This Wolbachia sp. subsp. Drosophila simulans (strain wRi) protein is Pyridoxine 5'-phosphate synthase.